The following is a 501-amino-acid chain: COP9 signalosome complex subunit 3 (501 aa).

The 171-residue stretch at 275 to 445 (RFEDALFLLE…VFWTELSPVP (171 aa)) folds into the PCI domain.

The protein belongs to the CSN3 family. As to quaternary structure, component of the CSN complex, probably composed of csn-1, csn-2, csn-3, csn-4, csn-5, csn-6 and csn-7. Within the complex it probably interacts directly with csn-2 and csn-4. May interact with itself.

The protein resides in the cytoplasm. It is found in the nucleus. In terms of biological role, component of the COP9 signalosome complex (CSN), a complex involved in various cellular and developmental processes. The CSN complex is an essential regulator of the ubiquitin (Ubl) conjugation pathway by mediating the deneddylation of the cullin subunits of the SCF-type E3 ligase complexes, leading to decrease the Ubl ligase activity of SCF. The CSN complex plays an essential role in embryogenesis and oogenesis and is required to regulate microtubule stability in the early embryo. Mediates mei-3/katanin targeting for degradation at the meiosis to mitosis transition via deneddylation of cul-3. This Caenorhabditis elegans protein is COP9 signalosome complex subunit 3 (csn-3).